The chain runs to 314 residues: Melanoma-associated antigen 2 (314 aa).

The segment covering 1–20 (MPLEQRSQHCKPEEGLEARG) has biased composition (basic and acidic residues). The disordered stretch occupies residues 1–69 (MPLEQRSQHC…SPPHSPQGAS (69 aa)). Low complexity predominate over residues 21-44 (EALGLVGAQAPATEEQQTASSSST). Ser64 bears the Phosphoserine mark. The region spanning 109 to 308 (ISRKMVELVH…ISYPPLHERA (200 aa)) is the MAGE domain.

Interacts with TRIM28 and UBE2H. Interacts with HDAC3. Interacts with PML (isoform PML-1, isoform PML-2, isoform PML-3, isoform PML-4 and isoform PML-5). Expressed in many tumors of several types, such as melanoma, head and neck squamous cell carcinoma, lung carcinoma and breast carcinoma, but not in normal tissues except for testes.

It localises to the nucleus. The protein localises to the PML body. In terms of biological role, reduces p53/TP53 transactivation function through recruitment of HDAC3 to p53/TP53 transcription sites. Also represses p73/TP73 activity. Proposed to enhance ubiquitin ligase activity of RING-type zinc finger-containing E3 ubiquitin-protein ligases. In vitro enhances ubiquitin ligase activity of TRIM28 and stimulates p53/TP53 ubiquitination by TRIM28 potentially in presence of Ubl-conjugating enzyme UBE2H. Proposed to act through recruitment and/or stabilization of the Ubl-conjugating enzyme (E2) at the E3:substrate complex. May play a role in embryonal development and tumor transformation or aspects of tumor progression. In vitro promotes cell viability in melanoma cell lines. Antigen recognized on a melanoma by autologous cytolytic T-lymphocytes. Negatively regulates acetylation and sumoylation of PML and represses PML-induced p53/TP53 acetylation and activation. This chain is Melanoma-associated antigen 2 (MAGEA2), found in Homo sapiens (Human).